Consider the following 960-residue polypeptide: Phosphoenolpyruvate carboxylase 1 (960 aa).

Ser7 is modified (phosphoserine). Residues His168 and Lys596 contribute to the active site.

It belongs to the PEPCase type 1 family. Homotetramer. Mg(2+) serves as cofactor.

Its subcellular location is the cytoplasm. It catalyses the reaction oxaloacetate + phosphate = phosphoenolpyruvate + hydrogencarbonate. It functions in the pathway photosynthesis; C3 acid pathway. Its activity is regulated as follows. By light-reversible phosphorylation. In terms of biological role, through the carboxylation of phosphoenolpyruvate (PEP) it forms oxaloacetate, a four-carbon dicarboxylic acid source for the tricarboxylic acid cycle. The sequence is that of Phosphoenolpyruvate carboxylase 1 (PEPC) from Sorghum bicolor (Sorghum).